The primary structure comprises 668 residues: DNA ligase (668 aa).

NAD(+)-binding positions include 34–38 (DAEYD), 83–84 (SL), and Glu-117. Catalysis depends on Lys-119, which acts as the N6-AMP-lysine intermediate. The NAD(+) site is built by Arg-140, Glu-177, Lys-293, and Lys-317. Positions 411, 414, 429, and 434 each coordinate Zn(2+). The 78-residue stretch at 591 to 668 (RVGGRFTGKT…SEDDFLELMQ (78 aa)) folds into the BRCT domain.

It belongs to the NAD-dependent DNA ligase family. LigA subfamily. It depends on Mg(2+) as a cofactor. The cofactor is Mn(2+).

The catalysed reaction is NAD(+) + (deoxyribonucleotide)n-3'-hydroxyl + 5'-phospho-(deoxyribonucleotide)m = (deoxyribonucleotide)n+m + AMP + beta-nicotinamide D-nucleotide.. In terms of biological role, DNA ligase that catalyzes the formation of phosphodiester linkages between 5'-phosphoryl and 3'-hydroxyl groups in double-stranded DNA using NAD as a coenzyme and as the energy source for the reaction. It is essential for DNA replication and repair of damaged DNA. This Citrifermentans bemidjiense (strain ATCC BAA-1014 / DSM 16622 / JCM 12645 / Bem) (Geobacter bemidjiensis) protein is DNA ligase.